The primary structure comprises 384 residues: Galactokinase (384 aa).

Residue 34–37 (EHTD) participates in substrate binding. Residue 123–129 (SSGLSSS) participates in ATP binding. Mg(2+) is bound by residues S129 and E161. The Proton acceptor role is filled by D173. A substrate-binding site is contributed by Y222.

Belongs to the GHMP kinase family. GalK subfamily.

Its subcellular location is the cytoplasm. It catalyses the reaction alpha-D-galactose + ATP = alpha-D-galactose 1-phosphate + ADP + H(+). Its pathway is carbohydrate metabolism; galactose metabolism. Catalyzes the transfer of the gamma-phosphate of ATP to D-galactose to form alpha-D-galactose-1-phosphate (Gal-1-P). This chain is Galactokinase, found in Haemophilus influenzae (strain PittGG).